A 431-amino-acid chain; its full sequence is Gamma-glutamyl phosphate reductase (431 aa).

Belongs to the gamma-glutamyl phosphate reductase family.

The protein localises to the cytoplasm. It catalyses the reaction L-glutamate 5-semialdehyde + phosphate + NADP(+) = L-glutamyl 5-phosphate + NADPH + H(+). Its pathway is amino-acid biosynthesis; L-proline biosynthesis; L-glutamate 5-semialdehyde from L-glutamate: step 2/2. Its function is as follows. Catalyzes the NADPH-dependent reduction of L-glutamate 5-phosphate into L-glutamate 5-semialdehyde and phosphate. The product spontaneously undergoes cyclization to form 1-pyrroline-5-carboxylate. This is Gamma-glutamyl phosphate reductase from Acetivibrio thermocellus (strain ATCC 27405 / DSM 1237 / JCM 9322 / NBRC 103400 / NCIMB 10682 / NRRL B-4536 / VPI 7372) (Clostridium thermocellum).